The sequence spans 386 residues: Meiotic chromosome segregation protein C1539.02 (386 aa).

Disordered stretches follow at residues 1–28 (MNQD…SNKS), 46–85 (RALI…SSKQ), and 366–386 (DIHE…KTKG). A compositionally biased stretch (polar residues) spans 15-28 (AETSQLKNFSSNKS).

The protein localises to the nucleus. Its function is as follows. Required for meiotic chromosome segregation. This is Meiotic chromosome segregation protein C1539.02 from Schizosaccharomyces pombe (strain 972 / ATCC 24843) (Fission yeast).